The following is a 459-amino-acid chain: UDP-N-acetylmuramoylalanine--D-glutamate ligase (459 aa).

Residue 119-125 (GTNGKTT) participates in ATP binding.

Belongs to the MurCDEF family.

The protein localises to the cytoplasm. It carries out the reaction UDP-N-acetyl-alpha-D-muramoyl-L-alanine + D-glutamate + ATP = UDP-N-acetyl-alpha-D-muramoyl-L-alanyl-D-glutamate + ADP + phosphate + H(+). Its pathway is cell wall biogenesis; peptidoglycan biosynthesis. In terms of biological role, cell wall formation. Catalyzes the addition of glutamate to the nucleotide precursor UDP-N-acetylmuramoyl-L-alanine (UMA). The polypeptide is UDP-N-acetylmuramoylalanine--D-glutamate ligase (Lacticaseibacillus casei (strain BL23) (Lactobacillus casei)).